The chain runs to 270 residues: Formamidopyrimidine-DNA glycosylase (270 aa).

The Schiff-base intermediate with DNA role is filled by Pro2. The active-site Proton donor is the Glu3. Lys58 acts as the Proton donor; for beta-elimination activity in catalysis. Residues His91, Arg110, and Arg151 each contribute to the DNA site. Residues 236–270 form an FPG-type zinc finger; that stretch reads FVYGRGGQPCKVCGTALREVKLGQRASVYCPRCQR. Arg260 serves as the catalytic Proton donor; for delta-elimination activity.

The protein belongs to the FPG family. In terms of assembly, monomer. It depends on Zn(2+) as a cofactor.

It catalyses the reaction Hydrolysis of DNA containing ring-opened 7-methylguanine residues, releasing 2,6-diamino-4-hydroxy-5-(N-methyl)formamidopyrimidine.. The enzyme catalyses 2'-deoxyribonucleotide-(2'-deoxyribose 5'-phosphate)-2'-deoxyribonucleotide-DNA = a 3'-end 2'-deoxyribonucleotide-(2,3-dehydro-2,3-deoxyribose 5'-phosphate)-DNA + a 5'-end 5'-phospho-2'-deoxyribonucleoside-DNA + H(+). Its function is as follows. Involved in base excision repair of DNA damaged by oxidation or by mutagenic agents. Acts as a DNA glycosylase that recognizes and removes damaged bases. Has a preference for oxidized purines, such as 7,8-dihydro-8-oxoguanine (8-oxoG). Has AP (apurinic/apyrimidinic) lyase activity and introduces nicks in the DNA strand. Cleaves the DNA backbone by beta-delta elimination to generate a single-strand break at the site of the removed base with both 3'- and 5'-phosphates. This is Formamidopyrimidine-DNA glycosylase from Pseudomonas putida (strain GB-1).